A 221-amino-acid polypeptide reads, in one-letter code: Transcriptional regulator GfcR (221 aa).

Residues 35 to 59 are disordered; that stretch reads ASWLVERSQPTDNSQSSSANNPTEA. Polar residues predominate over residues 42–57; the sequence is SQPTDNSQSSSANNPT.

It belongs to the purine/pyrimidine phosphoribosyltransferase family. GfcR subfamily.

Functionally, DNA-binding transcriptional regulator that functions as a regulator of central sugar catabolic pathways. The protein is Transcriptional regulator GfcR of Haloquadratum walsbyi (strain DSM 16790 / HBSQ001).